A 168-amino-acid polypeptide reads, in one-letter code: 2-C-methyl-D-erythritol 2,4-cyclodiphosphate synthase (168 aa).

A divalent metal cation contacts are provided by Asp-13 and His-15. 4-CDP-2-C-methyl-D-erythritol 2-phosphate-binding positions include 13–15 and 39–40; these read DVH and HS. Position 47 (His-47) interacts with a divalent metal cation. Residues 61-63, 66-70, Phe-144, and Lys-147 each bind 4-CDP-2-C-methyl-D-erythritol 2-phosphate; these read DIG and FPDTD.

The protein belongs to the IspF family. As to quaternary structure, homotrimer. A divalent metal cation is required as a cofactor.

The catalysed reaction is 4-CDP-2-C-methyl-D-erythritol 2-phosphate = 2-C-methyl-D-erythritol 2,4-cyclic diphosphate + CMP. Its pathway is isoprenoid biosynthesis; isopentenyl diphosphate biosynthesis via DXP pathway; isopentenyl diphosphate from 1-deoxy-D-xylulose 5-phosphate: step 4/6. Its function is as follows. Involved in the biosynthesis of isopentenyl diphosphate (IPP) and dimethylallyl diphosphate (DMAPP), two major building blocks of isoprenoid compounds. Catalyzes the conversion of 4-diphosphocytidyl-2-C-methyl-D-erythritol 2-phosphate (CDP-ME2P) to 2-C-methyl-D-erythritol 2,4-cyclodiphosphate (ME-CPP) with a corresponding release of cytidine 5-monophosphate (CMP). This Ralstonia pickettii (strain 12J) protein is 2-C-methyl-D-erythritol 2,4-cyclodiphosphate synthase.